The chain runs to 26 residues: Conotoxin Eb6.17 (26 aa).

Cystine bridges form between cysteine 7/cysteine 18 and cysteine 13/cysteine 25.

It belongs to the conotoxin O1 superfamily. Expressed by the venom duct.

It localises to the secreted. In Conus ebraeus (Hebrew cone), this protein is Conotoxin Eb6.17 (E1).